The primary structure comprises 827 residues: MSSGDVSRRQRVSRACDECHRRKIKCDQRRPCSNCIAYNYECTYGQPFKRLRHAPEKYIEFLELRLKYLRGLAEESDPNLKLPSFLAPPNDKDSPVNQSPWKRSDSSKRSSSQDEFESLFDRYGQLSLKDDGKADFRGSSSGFVFMKNIHQNIARNSTVPNPVQESNSSSSQPDPLSFPYLPPTPAEDEHKKPPLKIQLPPYEEALSIVSQFFMNDHFLVHIHHPASFFEKMHMYYKTGKTDNNFHFLLVATLCLGYTYMPDESPSANYPYHEAYEYYYYIRSSFSWEDSYTIEVVQILLSVALFALFSSRLSQAYTFTNNALLCCHELGLHKDFSDVLTSHESRLSKRVFYSVYVLACYTSTIVGLPLSIEDVDIDQSLPNSFDFTLENDQVPPRLIASECTSLEVFIQHITLSRILSHFVRKVYPVKSPSDSHCKVSLPAVRDHEEKLTYWWKNLPSYLKMSEVPKFSPKWIQAIILELKFRQIELIFYRPFIHSISTPIDNQNGSPMKPANFALKCAQSAERVVFLLQELAKSPNTPKLFFNLYSGYYALMTLTYCATLTKDDANKSNNFITKARLGFHCLQMIYRESTYYSTIMEAIKNLLIAYDMNSSGTENLDATPDVTGQLPNNFSQRTSNIPREFPQAQIFYSDAPYPGYYNPAQFQNAPTNFPMPTYGGRTQDQSYPRQNGYPSYSDGNVYPHDRVMINYGSSMPTANGFYVPNTYSPVPFPYNTSYPPYMSPTSNMPQAFQAYSQYPYQHPPFPLSEQMLPLPTSGVMMAPGAAKSGMPYPFIQPPSMTNQVAYPTVRDGSNNSPDHPSSSNSKRTE.

Positions 16–42 form a DNA-binding region, zn(2)-C6 fungal-type; sequence CDECHRRKIKCDQRRPCSNCIAYNYEC. Disordered stretches follow at residues 80-114, 158-193, and 794-827; these read LKLPSFLAPPNDKDSPVNQSPWKRSDSSKRSSSQD, TVPNPVQESNSSSSQPDPLSFPYLPPTPAEDEHKKP, and QPPSMTNQVAYPTVRDGSNNSPDHPSSSNSKRTE. Positions 102–112 are enriched in basic and acidic residues; that stretch reads KRSDSSKRSSS. Ser-112 is subject to Phosphoserine. Composition is skewed to low complexity over residues 159–179 and 811–827; these read VPNPVQESNSSSSQPDPLSFP and SNNSPDHPSSSNSKRTE.

This sequence belongs to the ASG1 family.

It localises to the cytoplasm. The protein resides in the nucleus. This is Putative transcriptional regulatory protein C16G5.16 from Schizosaccharomyces pombe (strain 972 / ATCC 24843) (Fission yeast).